Consider the following 402-residue polypeptide: Arabinosyltransferase RRA1 (402 aa).

At 1–13 (MAVRKEKVQPFRE) the chain is on the cytoplasmic side. A helical; Signal-anchor for type II membrane protein membrane pass occupies residues 14–34 (CGIAIAVLVGIFIGCVCTILI). The Lumenal portion of the chain corresponds to 35 to 402 (PNDFVNFRSS…DALDRFRDGS (368 aa)). The DXD motif signature appears at 225–227 (DVD). A glycan (N-linked (GlcNAc...) asparagine) is linked at N253.

This sequence belongs to the glycosyltransferase 77 family. Expressed in leaf meristem and at points of cauline leaf attachments on the primary stem. Expressed at low levels in siliques.

The protein localises to the golgi apparatus membrane. Its function is as follows. Plays a role in the arabinosylation of cell wall components. Involved in the arabinosylation of extensin proteins in root hair cells. Extensins are structural glycoproteins present in cell walls and its arabinosylation is important for root hair cell development. This chain is Arabinosyltransferase RRA1, found in Arabidopsis thaliana (Mouse-ear cress).